A 454-amino-acid polypeptide reads, in one-letter code: Pup--protein ligase (454 aa).

Glu-9 provides a ligand contact to Mg(2+). ATP is bound at residue Arg-53. Mg(2+) is bound at residue Tyr-55. Residue Asp-57 is the Proton acceptor of the active site. Glu-63 contributes to the Mg(2+) binding site. Thr-66 and Trp-420 together coordinate ATP.

This sequence belongs to the Pup ligase/Pup deamidase family. Pup-conjugating enzyme subfamily.

It catalyses the reaction ATP + [prokaryotic ubiquitin-like protein]-L-glutamate + [protein]-L-lysine = ADP + phosphate + N(6)-([prokaryotic ubiquitin-like protein]-gamma-L-glutamyl)-[protein]-L-lysine.. Its pathway is protein degradation; proteasomal Pup-dependent pathway. It functions in the pathway protein modification; protein pupylation. In terms of biological role, catalyzes the covalent attachment of the prokaryotic ubiquitin-like protein modifier Pup to the proteasomal substrate proteins, thereby targeting them for proteasomal degradation. This tagging system is termed pupylation. The ligation reaction involves the side-chain carboxylate of the C-terminal glutamate of Pup and the side-chain amino group of a substrate lysine. The protein is Pup--protein ligase of Arthrobacter sp. (strain FB24).